Here is a 294-residue protein sequence, read N- to C-terminus: Nucleotide-binding protein Swol_0262 (294 aa).

15–22 (GLSGAGKT) is a binding site for ATP. 65 to 68 (DVRG) contacts GTP.

This sequence belongs to the RapZ-like family.

Its function is as follows. Displays ATPase and GTPase activities. This Syntrophomonas wolfei subsp. wolfei (strain DSM 2245B / Goettingen) protein is Nucleotide-binding protein Swol_0262.